A 661-amino-acid polypeptide reads, in one-letter code: Threonine--tRNA ligase (661 aa).

In terms of domain architecture, TGS spans 1–64 (MSHSVSLTFP…ADGKIEIVTR (64 aa)). The interval 245 to 547 (DHRRLGREMD…LLENYAGHMP (303 aa)) is catalytic. The Zn(2+) site is built by cysteine 341, histidine 392, and histidine 524.

It belongs to the class-II aminoacyl-tRNA synthetase family. In terms of assembly, homodimer. Zn(2+) serves as cofactor.

It is found in the cytoplasm. It carries out the reaction tRNA(Thr) + L-threonine + ATP = L-threonyl-tRNA(Thr) + AMP + diphosphate + H(+). Its function is as follows. Catalyzes the attachment of threonine to tRNA(Thr) in a two-step reaction: L-threonine is first activated by ATP to form Thr-AMP and then transferred to the acceptor end of tRNA(Thr). Also edits incorrectly charged L-seryl-tRNA(Thr). This is Threonine--tRNA ligase from Sinorhizobium fredii (strain NBRC 101917 / NGR234).